Here is a 581-residue protein sequence, read N- to C-terminus: Proline--tRNA ligase 1 (581 aa).

Belongs to the class-II aminoacyl-tRNA synthetase family. ProS type 1 subfamily. As to quaternary structure, homodimer.

The protein localises to the cytoplasm. The catalysed reaction is tRNA(Pro) + L-proline + ATP = L-prolyl-tRNA(Pro) + AMP + diphosphate. Its function is as follows. Catalyzes the attachment of proline to tRNA(Pro) in a two-step reaction: proline is first activated by ATP to form Pro-AMP and then transferred to the acceptor end of tRNA(Pro). As ProRS can inadvertently accommodate and process non-cognate amino acids such as alanine and cysteine, to avoid such errors it has two additional distinct editing activities against alanine. One activity is designated as 'pretransfer' editing and involves the tRNA(Pro)-independent hydrolysis of activated Ala-AMP. The other activity is designated 'posttransfer' editing and involves deacylation of mischarged Ala-tRNA(Pro). The misacylated Cys-tRNA(Pro) is not edited by ProRS. This is Proline--tRNA ligase 1 from Rhodococcus jostii (strain RHA1).